The sequence spans 365 residues: Histidinol-phosphate aminotransferase (365 aa).

Lys223 is subject to N6-(pyridoxal phosphate)lysine.

The protein belongs to the class-II pyridoxal-phosphate-dependent aminotransferase family. Histidinol-phosphate aminotransferase subfamily. As to quaternary structure, homodimer. Pyridoxal 5'-phosphate serves as cofactor.

The catalysed reaction is L-histidinol phosphate + 2-oxoglutarate = 3-(imidazol-4-yl)-2-oxopropyl phosphate + L-glutamate. The protein operates within amino-acid biosynthesis; L-histidine biosynthesis; L-histidine from 5-phospho-alpha-D-ribose 1-diphosphate: step 7/9. In Brucella melitensis biotype 1 (strain ATCC 23456 / CCUG 17765 / NCTC 10094 / 16M), this protein is Histidinol-phosphate aminotransferase.